We begin with the raw amino-acid sequence, 251 residues long: Chloride intracellular channel protein 5 (251 aa).

The interval 1-98 is required for insertion into the membrane; the sequence is MTDSATTNGD…EEFLEETLTP (98 aa). A G-site motif is present at residues 32–35; the sequence is CPFS. The helical transmembrane segment at 34–54 threads the bilayer; that stretch reads FSQRLFMILWLKGVVFNVTTV. The GST C-terminal domain occupies 101 to 241; sequence YPKLAAKHRE…AADSEIELAY (141 aa).

It belongs to the chloride channel CLIC family. In terms of assembly, component of a multimeric complex consisting of several cytoskeletal proteins, including actin, ezrin, alpha-actinin, gelsolin, and IQGAP1. Interacts with AKAP9. Interacts with TPRN. TPRN, CLIC5 and PTPQR form concentric rings at the base of stereocilia and may form a complex. Interacts with EZR, MYO6 and RDX; the proteins may work together as a complex to stabilize linkages between the plasma membrane and subjacent actin cytoskeleton at the stereocilium base. As to expression, detected in lung and inner ear. Detected in embryonic cochlea, on microvilli-covered apical surfaces of interdental cells, columnar cells of Kolliker's organ, and on stereocilia of inner and outer hair cells (at protein level). Also detected in the eye, where it localizes to lens fiber cells in the lens epithelium (at protein level).

It localises to the golgi apparatus. It is found in the cytoplasm. The protein resides in the cytoskeleton. Its subcellular location is the microtubule organizing center. The protein localises to the centrosome. It localises to the cell cortex. It is found in the membrane. The protein resides in the apical cell membrane. Its subcellular location is the mitochondrion. The protein localises to the cell projection. It localises to the stereocilium. It carries out the reaction Na(+)(in) = Na(+)(out). It catalyses the reaction K(+)(in) = K(+)(out). The enzyme catalyses chloride(in) = chloride(out). Its activity is regulated as follows. Inhibited by F-actin. Its function is as follows. In the soluble state, catalyzes glutaredoxin-like thiol disulfide exchange reactions with reduced glutathione as electron donor. Can insert into membranes and form non-selective ion channels almost equally permeable to Na(+), K(+) and Cl(-). Required for normal hearing. Necessary for the formation of stereocilia in the inner ear and normal development of the organ of Corti. Required for the proper localization of PTPRQ and RDX to the stereocilium base during postnatal maturation of hair bundles. Can insert into membranes and form poorly selective ion channels that may also transport chloride ions. Required for the development and/or maintenance of the proper glomerular endothelial cell and podocyte architecture. Plays a role in formation of the lens suture in the eye, which is important for normal optical properties of the lens. The chain is Chloride intracellular channel protein 5 (Clic5) from Mus musculus (Mouse).